Here is a 179-residue protein sequence, read N- to C-terminus: Large ribosomal subunit protein uL5 (179 aa).

It belongs to the universal ribosomal protein uL5 family. In terms of assembly, part of the 50S ribosomal subunit; part of the 5S rRNA/L5/L18/L25 subcomplex. Contacts the 5S rRNA and the P site tRNA. Forms a bridge to the 30S subunit in the 70S ribosome.

This is one of the proteins that bind and probably mediate the attachment of the 5S RNA into the large ribosomal subunit, where it forms part of the central protuberance. In the 70S ribosome it contacts protein S13 of the 30S subunit (bridge B1b), connecting the 2 subunits; this bridge is implicated in subunit movement. Contacts the P site tRNA; the 5S rRNA and some of its associated proteins might help stabilize positioning of ribosome-bound tRNAs. In Acidovorax ebreus (strain TPSY) (Diaphorobacter sp. (strain TPSY)), this protein is Large ribosomal subunit protein uL5.